The chain runs to 466 residues: Voltage-gated potassium channel regulatory subunit KCNG2 (466 aa).

Residues 1 to 174 (MEPWPCSPGG…DVVDNPHSGL (174 aa)) are Cytoplasmic-facing. Positions 131-155 (AEARAGPTERGAQGSPARALGPRGR) are disordered. Residues 175-196 (AGKLFACVSVSFVAVTAVGLCL) traverse the membrane as a helical segment. The Extracellular portion of the chain corresponds to 197–217 (STMPDIRAEEERGECSPKCRS). The chain crosses the membrane as a helical span at residues 218–239 (LFVLETVCVAWFSFEFLLRSLQ). The Cytoplasmic segment spans residues 240-250 (AESKCAFLRAP). The chain crosses the membrane as a helical span at residues 251–271 (LNIIDILALLPFYVSLLLGLA). Over 272–283 (AGPGGTKLLERA) the chain is Extracellular. The helical; Voltage-sensor transmembrane segment at 284–304 (GLVLRLLRALRVLYVMRLARH) threads the bilayer. Residues 305–319 (SLGLRSLGLTMRRCA) lie on the Cytoplasmic side of the membrane. A helical transmembrane segment spans residues 320-341 (REFGLLLLFLCVAMALFAPLVH). The Extracellular portion of the chain corresponds to 342 to 356 (LAERELGARRDFSSV). An intramembrane region (helical) is located at residues 357-368 (PASYWWAVISMT). The Selectivity filter signature appears at 369 to 374 (TVGYGD). Residues 369 to 376 (TVGYGDMV) lie within the membrane without spanning it. Over 377 to 383 (PRSLPGQ) the chain is Extracellular. A helical membrane pass occupies residues 384–412 (VVALSSILSGILLMAFPVTSIFHTFSRSY). Topologically, residues 413–466 (SELKEQQQRAASPEPALQEDSTHSATATEDSSQGPDSAGLADDSADALWVRAGR) are cytoplasmic. The segment at 416-466 (KEQQQRAASPEPALQEDSTHSATATEDSSQGPDSAGLADDSADALWVRAGR) is disordered. A compositionally biased stretch (polar residues) spans 435 to 447 (HSATATEDSSQGP). A compositionally biased stretch (low complexity) spans 448-460 (DSAGLADDSADAL).

It belongs to the potassium channel family. G (TC 1.A.1.2) subfamily. Kv6.2/KCNG2 sub-subfamily. As to quaternary structure, heterodimer with KCNB1. As to expression, highly expressed in heart, liver, skeletal muscle, kidney and pancreas. Detected at low levels in brain, lung and placenta.

The protein resides in the cell membrane. Functionally, regulatory alpha-subunit of the voltage-gated potassium (Kv) channel which, when coassembled with KCNB1, can modulate the kinetics and conductance-voltage relationship. Modulates channel activity by shifting the threshold and the half-maximal activation to more negative values. Potassium channel subunit that does not form functional channels by itself. This Homo sapiens (Human) protein is Voltage-gated potassium channel regulatory subunit KCNG2.